The primary structure comprises 262 residues: tRNA pseudouridine synthase A (262 aa).

Aspartate 54 serves as the catalytic Nucleophile. Tyrosine 113 lines the substrate pocket.

Belongs to the tRNA pseudouridine synthase TruA family. Homodimer.

It catalyses the reaction uridine(38/39/40) in tRNA = pseudouridine(38/39/40) in tRNA. Its function is as follows. Formation of pseudouridine at positions 38, 39 and 40 in the anticodon stem and loop of transfer RNAs. The polypeptide is tRNA pseudouridine synthase A (Lactobacillus delbrueckii subsp. bulgaricus (strain ATCC BAA-365 / Lb-18)).